The following is a 636-amino-acid chain: Transcription termination factor FttA (636 aa).

Residues 4–72 are KHa; it reads ELELKRIRDE…VVFRWNVDKR (69 aa). The segment at 73-140 is KHb; that stretch reads KDPAETKDYI…WQPKTIRTPP (68 aa). Residues 181-383 are metallo-beta-lactamase N-terminus; the sequence is NIRMNALGGF…LLIEATYGGP (203 aa). Positions 242, 244, 246, 247, 329, and 352 each coordinate Zn(2+). The segment at 384-577 is beta-Casp; sequence QDRIPSRQES…LKVFTLEGFS (194 aa). Residues 578–636 are metallo-beta-lactamase C-terminus; sequence GHSSRSQISQFLRRIQPRPKVVIVNHGEESKCVSLSTMIHKKLRKSTKSPKNLEVVLLK. A Zn(2+)-binding site is contributed by H603.

The protein belongs to the metallo-beta-lactamase superfamily. RNA-metabolizing metallo-beta-lactamase-like family. FttA subfamily. In terms of assembly, homodimer. Interacts with RNA polymerase (RNAP), interacts with the Spt4-Spt5 complex. Zn(2+) serves as cofactor.

Terminates transcription on the whole genome. Termination is linked to FttA-mediated RNA cleavage and does not require NTP hydrolysis. Cleaves endonucleolytically at the RNA exit channel of RNA polymerase (RNAP); the 5'-3' exonuclease activity of this protein degrades the nascent RNA released from RNAP. Its function is as follows. Terminates transcription genome-wide in M.maripaludis. Restores wild-type growth to a strain of Methanococcus maripaludis depleted for this gene at 22 degrees Celsius and prevents transcriptional read-through. Transcription termination is most effective in vivo on RNAs with more than one U4-tract in their 3'-ends. Has endonuclease activity after U-rich tracts in transcription termination sequences. This is Transcription termination factor FttA from Lokiarchaeum sp. (strain GC14_75).